Here is a 343-residue protein sequence, read N- to C-terminus: Transcription factor MYB11 (343 aa).

2 HTH myb-type domains span residues 9-61 (KVGI…INYL) and 62-116 (RSDI…SRKL). 2 consecutive DNA-binding regions (H-T-H motif) follow at residues 37 to 61 (WRSL…INYL) and 89 to 112 (WSTI…NSHL). Residues 126–146 (ANTVENAPPPPKRRPGRTSRS) are disordered.

In terms of tissue distribution, expressed in seedlings, roots, cotyledons, leaves and apical meristems.

Its subcellular location is the nucleus. Functionally, modulates overall growth by reducing the proliferation activity of meristematic cells and delaying development. Flavonol-specific transcription activator involved in the regulation of several genes of flavonoid biosynthesis. Activates the expression of CHS, CHI, F3H and FLS1. Confers tolerance to UV-B. In Arabidopsis thaliana (Mouse-ear cress), this protein is Transcription factor MYB11.